We begin with the raw amino-acid sequence, 302 residues long: UDP-N-acetylenolpyruvoylglucosamine reductase (302 aa).

Residues 31–213 enclose the FAD-binding PCMH-type domain; it reads KIGGPADFLI…KKIREFREKR (183 aa). Arginine 176 is a catalytic residue. The active-site Proton donor is the serine 226. The active site involves glutamate 296.

This sequence belongs to the MurB family. It depends on FAD as a cofactor.

It localises to the cytoplasm. It catalyses the reaction UDP-N-acetyl-alpha-D-muramate + NADP(+) = UDP-N-acetyl-3-O-(1-carboxyvinyl)-alpha-D-glucosamine + NADPH + H(+). Its pathway is cell wall biogenesis; peptidoglycan biosynthesis. In terms of biological role, cell wall formation. The sequence is that of UDP-N-acetylenolpyruvoylglucosamine reductase from Carboxydothermus hydrogenoformans (strain ATCC BAA-161 / DSM 6008 / Z-2901).